Consider the following 319-residue polypeptide: Formimidoylglutamase (319 aa).

Mn(2+) is bound by residues His127, Asp150, His152, Asp154, Asp242, and Asp244.

This sequence belongs to the arginase family. Mn(2+) serves as cofactor.

It carries out the reaction N-formimidoyl-L-glutamate + H2O = formamide + L-glutamate. It participates in amino-acid degradation; L-histidine degradation into L-glutamate; L-glutamate from N-formimidoyl-L-glutamate (hydrolase route): step 1/1. In terms of biological role, catalyzes the conversion of N-formimidoyl-L-glutamate to L-glutamate and formamide. The protein is Formimidoylglutamase of Halalkalibacterium halodurans (strain ATCC BAA-125 / DSM 18197 / FERM 7344 / JCM 9153 / C-125) (Bacillus halodurans).